An 815-amino-acid chain; its full sequence is (-)-kolavenyl diphosphate synthase TPS28, chloroplastic (815 aa).

The N-terminal 51 residues, 1 to 51 (MFMSSSSSSHARRPQLSSFSYLHPPLPFPGLSFFNTRDKRVNFDSTRIICI), are a transit peptide targeting the chloroplast. K247 is a binding site for substrate. Residues D379 and D381 each contribute to the Mg(2+) site. Residues 379-382 (DIDD) carry the DXDD motif motif. K465 serves as a coordination point for substrate.

This sequence belongs to the terpene synthase family. Tpsc subfamily. Mg(2+) serves as cofactor.

It is found in the plastid. The protein localises to the chloroplast. It carries out the reaction (2E,6E,10E)-geranylgeranyl diphosphate = (-)-kolavenyl diphosphate. Inhibited by high concentrations of magnesium. In terms of biological role, diterpene synthase that catalyzes the formation of (-)-kolavenyl diphosphate from geranylgeranyl diphosphate (GGPP). The protein is (-)-kolavenyl diphosphate synthase TPS28, chloroplastic of Tripterygium wilfordii (Thunder God vine).